Reading from the N-terminus, the 480-residue chain is Adenosylhomocysteinase (480 aa).

Residues T63, D142, and E203 each coordinate substrate. An NAD(+)-binding site is contributed by 204 to 206 (TTT). 2 residues coordinate substrate: K233 and D237. Residues N238, 267-272 (GYGDVG), E290, N325, 346-348 (IGH), and N394 each bind NAD(+).

The protein belongs to the adenosylhomocysteinase family. NAD(+) serves as cofactor.

Its subcellular location is the cytoplasm. The catalysed reaction is S-adenosyl-L-homocysteine + H2O = L-homocysteine + adenosine. The protein operates within amino-acid biosynthesis; L-homocysteine biosynthesis; L-homocysteine from S-adenosyl-L-homocysteine: step 1/1. In terms of biological role, may play a key role in the regulation of the intracellular concentration of adenosylhomocysteine. This chain is Adenosylhomocysteinase, found in Xylella fastidiosa (strain 9a5c).